Reading from the N-terminus, the 195-residue chain is Large ribosomal subunit protein uL11m (195 aa).

The protein belongs to the universal ribosomal protein uL11 family. In terms of assembly, component of the mitochondrial ribosome large subunit (39S) which comprises a 16S rRNA and about 50 distinct proteins.

Its subcellular location is the mitochondrion. The sequence is that of Large ribosomal subunit protein uL11m (mrpl-11) from Caenorhabditis elegans.